A 154-amino-acid polypeptide reads, in one-letter code: Interleukin-2 (154 aa).

The N-terminal stretch at 1–20 (MYKIQLLSCIALTLILVTNS) is a signal peptide. The cysteines at positions 78 and 126 are disulfide-linked. A glycan (N-linked (GlcNAc...) asparagine) is linked at asparagine 111.

This sequence belongs to the IL-2 family.

The protein resides in the secreted. Functionally, cytokine produced by activated CD4-positive helper T-cells and to a lesser extend activated CD8-positive T-cells and natural killer (NK) cells that plays pivotal roles in the immune response and tolerance. Binds to a receptor complex composed of either the high-affinity trimeric IL-2R (IL2RA/CD25, IL2RB/CD122 and IL2RG/CD132) or the low-affinity dimeric IL-2R (IL2RB and IL2RG). Interaction with the receptor leads to oligomerization and conformation changes in the IL-2R subunits resulting in downstream signaling starting with phosphorylation of JAK1 and JAK3. In turn, JAK1 and JAK3 phosphorylate the receptor to form a docking site leading to the phosphorylation of several substrates including STAT5. This process leads to activation of several pathways including STAT, phosphoinositide-3-kinase/PI3K and mitogen-activated protein kinase/MAPK pathways. Functions as a T-cell growth factor and can increase NK-cell cytolytic activity as well. Promotes strong proliferation of activated B-cells and subsequently immunoglobulin production. Plays a pivotal role in regulating the adaptive immune system by controlling the survival and proliferation of regulatory T-cells, which are required for the maintenance of immune tolerance. Moreover, participates in the differentiation and homeostasis of effector T-cell subsets, including Th1, Th2, Th17 as well as memory CD8-positive T-cells. The protein is Interleukin-2 (IL2) of Felis catus (Cat).